Consider the following 131-residue polypeptide: Large ribosomal subunit protein uL22c (131 aa).

It belongs to the universal ribosomal protein uL22 family. In terms of assembly, part of the 50S ribosomal subunit.

Its subcellular location is the plastid. This protein binds specifically to 23S rRNA. Its function is as follows. The globular domain of the protein is located near the polypeptide exit tunnel on the outside of the subunit, while an extended beta-hairpin is found that lines the wall of the exit tunnel in the center of the 70S ribosome. This is Large ribosomal subunit protein uL22c (rpl22) from Aneura mirabilis (Parasitic liverwort).